The primary structure comprises 357 residues: Cytochrome c peroxidase, mitochondrial (357 aa).

The N-terminal 23 residues, 1–23 (MSATALRIAPIASRTFQRRLGYL), are a transit peptide targeting the mitochondrion. Residue H116 is the Proton acceptor of the active site. The segment at 189–212 (PWRSGRTDLPEDMTPDNGRLPDGD) is disordered. H239 serves as a coordination point for heme b. W255 functions as the Tryptophan radical intermediate in the catalytic mechanism.

This sequence belongs to the peroxidase family. Cytochrome c peroxidase subfamily. Forms a one-to-one complex with cytochrome c. Requires heme b as cofactor.

It localises to the mitochondrion matrix. Its subcellular location is the mitochondrion intermembrane space. It catalyses the reaction 2 Fe(II)-[cytochrome c] + H2O2 + 2 H(+) = 2 Fe(III)-[cytochrome c] + 2 H2O. In terms of biological role, destroys radicals which are normally produced within the cells and which are toxic to biological systems. This is Cytochrome c peroxidase, mitochondrial from Candida glabrata (strain ATCC 2001 / BCRC 20586 / JCM 3761 / NBRC 0622 / NRRL Y-65 / CBS 138) (Yeast).